The following is a 236-amino-acid chain: Uridylate kinase (236 aa).

Residue 10–13 (KLSG) coordinates ATP. Residues 18–23 (GEDGYG) are involved in allosteric activation by GTP. G52 is a binding site for UMP. Residues G53 and R57 each coordinate ATP. UMP is bound by residues D72 and 133-140 (TGNPYFTT). ATP-binding residues include T160, Y166, and D169.

The protein belongs to the UMP kinase family. Homohexamer.

The protein localises to the cytoplasm. It catalyses the reaction UMP + ATP = UDP + ADP. Its pathway is pyrimidine metabolism; CTP biosynthesis via de novo pathway; UDP from UMP (UMPK route): step 1/1. Allosterically activated by GTP. Inhibited by UTP. Catalyzes the reversible phosphorylation of UMP to UDP. The sequence is that of Uridylate kinase from Chlorobium phaeobacteroides (strain DSM 266 / SMG 266 / 2430).